Reading from the N-terminus, the 337-residue chain is DNA-directed RNA polymerase subunit alpha (337 aa).

The alpha N-terminal domain (alpha-NTD) stretch occupies residues 1–231; the sequence is MRNITTSAYT…KQLSVFDKIT (231 aa). The segment at 247-337 is alpha C-terminal domain (alpha-CTD); that stretch reads ENTKLLQNIT…IAELKAQNEG (91 aa).

The protein belongs to the RNA polymerase alpha chain family. In terms of assembly, homodimer. The RNAP catalytic core consists of 2 alpha, 1 beta, 1 beta' and 1 omega subunit. When a sigma factor is associated with the core the holoenzyme is formed, which can initiate transcription.

It carries out the reaction RNA(n) + a ribonucleoside 5'-triphosphate = RNA(n+1) + diphosphate. DNA-dependent RNA polymerase catalyzes the transcription of DNA into RNA using the four ribonucleoside triphosphates as substrates. In Campylobacter jejuni subsp. jejuni serotype O:2 (strain ATCC 700819 / NCTC 11168), this protein is DNA-directed RNA polymerase subunit alpha.